The primary structure comprises 209 residues: Probable phosphatidylglycerophosphatase, mitochondrial (209 aa).

The Phosphoryl acceptor motif lies at 57-61 (DKDNC).

The protein belongs to the GEP4 family.

It is found in the mitochondrion inner membrane. The catalysed reaction is a 1,2-diacyl-sn-glycero-3-phospho-(1'-sn-glycero-3'-phosphate) + H2O = a 1,2-diacyl-sn-glycero-3-phospho-(1'-sn-glycerol) + phosphate. Its pathway is phospholipid metabolism; phosphatidylglycerol biosynthesis; phosphatidylglycerol from CDP-diacylglycerol: step 2/2. Functionally, phosphatidylglycerophosphatase involved in the biosynthesis of cardiolipin (CL), a unique dimeric phosphoglycerolipid predominantly present in mitochondrial membranes and which has important functions for cellular energy metabolism, mitochondrial dynamics and the initiation of apoptotic pathways. The protein is Probable phosphatidylglycerophosphatase, mitochondrial (gep4) of Schizosaccharomyces pombe (strain 972 / ATCC 24843) (Fission yeast).